A 25-amino-acid chain; its full sequence is Chitinolytic alpha-amylase inhibitor PvCAI (25 aa).

As to quaternary structure, homodimer.

The enzyme catalyses Random endo-hydrolysis of N-acetyl-beta-D-glucosaminide (1-&gt;4)-beta-linkages in chitin and chitodextrins.. Its function is as follows. Alpha-amylase inhibitor, active against Z.subfasciatus alpha-amylase (ZSA) but not porcine pancreatic alpha-amylase (PPA). Has chitinase activity. The sequence is that of Chitinolytic alpha-amylase inhibitor PvCAI from Phaseolus vulgaris (Kidney bean).